A 465-amino-acid chain; its full sequence is tRNA modification GTPase MnmE (465 aa).

(6S)-5-formyl-5,6,7,8-tetrahydrofolate contacts are provided by arginine 24, glutamate 84, and lysine 127. One can recognise a TrmE-type G domain in the interval 223-383 (GLNIVLAGQP…LRGELLRLIG (161 aa)). Asparagine 233 contributes to the K(+) binding site. GTP contacts are provided by residues 233–238 (NVGKSS), 252–258 (TAIAGTT), and 277–280 (DTAG). Serine 237 is a Mg(2+) binding site. The K(+) site is built by threonine 252, isoleucine 254, and threonine 257. Threonine 258 is a binding site for Mg(2+). Residue lysine 465 coordinates (6S)-5-formyl-5,6,7,8-tetrahydrofolate.

This sequence belongs to the TRAFAC class TrmE-Era-EngA-EngB-Septin-like GTPase superfamily. TrmE GTPase family. Homodimer. Heterotetramer of two MnmE and two MnmG subunits. It depends on K(+) as a cofactor.

It localises to the cytoplasm. Exhibits a very high intrinsic GTPase hydrolysis rate. Involved in the addition of a carboxymethylaminomethyl (cmnm) group at the wobble position (U34) of certain tRNAs, forming tRNA-cmnm(5)s(2)U34. The chain is tRNA modification GTPase MnmE from Janthinobacterium sp. (strain Marseille) (Minibacterium massiliensis).